The sequence spans 94 residues: Co-chaperonin GroES (94 aa).

This sequence belongs to the GroES chaperonin family. Heptamer of 7 subunits arranged in a ring. Interacts with the chaperonin GroEL.

The protein localises to the cytoplasm. Its function is as follows. Together with the chaperonin GroEL, plays an essential role in assisting protein folding. The GroEL-GroES system forms a nano-cage that allows encapsulation of the non-native substrate proteins and provides a physical environment optimized to promote and accelerate protein folding. GroES binds to the apical surface of the GroEL ring, thereby capping the opening of the GroEL channel. The chain is Co-chaperonin GroES from Geobacillus stearothermophilus (Bacillus stearothermophilus).